The chain runs to 74 residues: Exodeoxyribonuclease 7 small subunit (74 aa).

The protein belongs to the XseB family. In terms of assembly, heterooligomer composed of large and small subunits.

The protein localises to the cytoplasm. The catalysed reaction is Exonucleolytic cleavage in either 5'- to 3'- or 3'- to 5'-direction to yield nucleoside 5'-phosphates.. In terms of biological role, bidirectionally degrades single-stranded DNA into large acid-insoluble oligonucleotides, which are then degraded further into small acid-soluble oligonucleotides. This is Exodeoxyribonuclease 7 small subunit from Vesicomyosocius okutanii subsp. Calyptogena okutanii (strain HA).